The primary structure comprises 628 residues: Glutamyl-tRNA(Gln) amidotransferase subunit E (628 aa).

The protein belongs to the GatB/GatE family. GatE subfamily. Heterodimer of GatD and GatE.

The enzyme catalyses L-glutamyl-tRNA(Gln) + L-glutamine + ATP + H2O = L-glutaminyl-tRNA(Gln) + L-glutamate + ADP + phosphate + H(+). In terms of biological role, allows the formation of correctly charged Gln-tRNA(Gln) through the transamidation of misacylated Glu-tRNA(Gln) in organisms which lack glutaminyl-tRNA synthetase. The reaction takes place in the presence of glutamine and ATP through an activated gamma-phospho-Glu-tRNA(Gln). The GatDE system is specific for glutamate and does not act on aspartate. The chain is Glutamyl-tRNA(Gln) amidotransferase subunit E from Sulfurisphaera tokodaii (strain DSM 16993 / JCM 10545 / NBRC 100140 / 7) (Sulfolobus tokodaii).